A 246-amino-acid chain; its full sequence is UDP-N-acetyl-D-mannosaminuronic acid transferase (246 aa).

Belongs to the glycosyltransferase 26 family.

The catalysed reaction is UDP-N-acetyl-alpha-D-mannosaminouronate + N-acetyl-alpha-D-glucosaminyl-di-trans,octa-cis-undecaprenyl diphosphate = beta-D-ManNAcA-(1-&gt;4)-alpha-D-GlcNAc-di-trans,octa-cis-undecaprenyl diphosphate + UDP + H(+). It functions in the pathway bacterial outer membrane biogenesis; enterobacterial common antigen biosynthesis. In terms of biological role, catalyzes the synthesis of Und-PP-GlcNAc-ManNAcA (Lipid II), the second lipid-linked intermediate involved in enterobacterial common antigen (ECA) synthesis. The polypeptide is UDP-N-acetyl-D-mannosaminuronic acid transferase (Escherichia coli (strain 55989 / EAEC)).